A 150-amino-acid chain; its full sequence is MAKNTVSARFRKVDVDEYDENKFVDEEEAGEGQQGPDEGEVDSAIRGGNMMGALQAVLKNPPINTKNQSAKDQAEHLVLKVLISFKANEIEKAVQSLDKNSMDLLMKYIYKGFESPSDNSSAVLLQWHEKALAVAGVGSIVRVLTARKTV.

Residues 21-45 (NKFVDEEEAGEGQQGPDEGEVDSAI) are disordered.

Belongs to the ARPC5 family. In terms of assembly, component of the Arp2/3 complex composed of actr2/arp2, actr3/arp3, arpc1 (arpc1a or arpc1b), arpc2, arpc3, arpc4 and arpc5.

The protein resides in the cytoplasm. Its subcellular location is the cytoskeleton. It localises to the cell projection. The protein localises to the nucleus. Its function is as follows. Component of the Arp2/3 complex, a multiprotein complex that mediates actin polymerization upon stimulation by nucleation-promoting factor (NPF). The Arp2/3 complex mediates the formation of branched actin networks in the cytoplasm, providing the force for cell motility. In addition to its role in the cytoplasmic cytoskeleton, the Arp2/3 complex also promotes actin polymerization in the nucleus, thereby regulating gene transcription and repair of damaged DNA. The Arp2/3 complex promotes homologous recombination (HR) repair in response to DNA damage by promoting nuclear actin polymerization, leading to drive motility of double-strand breaks (DSBs). This chain is Actin-related protein 2/3 complex subunit 5-C (arpc5-c), found in Xenopus laevis (African clawed frog).